Here is a 210-residue protein sequence, read N- to C-terminus: Thymidylate kinase (210 aa).

Residue 10–17 participates in ATP binding; it reads GLEGAGKS.

The protein belongs to the thymidylate kinase family.

It catalyses the reaction dTMP + ATP = dTDP + ADP. Its function is as follows. Phosphorylation of dTMP to form dTDP in both de novo and salvage pathways of dTTP synthesis. The polypeptide is Thymidylate kinase (Hamiltonella defensa subsp. Acyrthosiphon pisum (strain 5AT)).